Consider the following 462-residue polypeptide: Glycine--tRNA ligase (462 aa).

Substrate contacts are provided by R101 and E164. ATP-binding positions include 196 to 198 (RNE), 206 to 211 (FRTREF), 283 to 284 (EL), and 327 to 330 (GVDR). 211-215 (FEQME) is a substrate binding site. 323–327 (EPSAG) contacts substrate.

It belongs to the class-II aminoacyl-tRNA synthetase family. Homodimer.

It localises to the cytoplasm. The enzyme catalyses tRNA(Gly) + glycine + ATP = glycyl-tRNA(Gly) + AMP + diphosphate. Functionally, catalyzes the attachment of glycine to tRNA(Gly). The protein is Glycine--tRNA ligase of Thermobifida fusca (strain YX).